The following is a 375-amino-acid chain: G-protein coupled estrogen receptor 1 (375 aa).

Met-1 is subject to N-acetylmethionine. The Extracellular segment spans residues 1–62; sequence MDVTSQARGV…QQYVIGLFLS (62 aa). N-linked (GlcNAc...) asparagine glycans are attached at residues Asn-25, Asn-32, and Asn-44. A helical membrane pass occupies residues 63–84; the sequence is CLYTIFLFPIGFVGNILILVVN. At 85–96 the chain is on the cytoplasmic side; that stretch reads ISFREKMTIPDL. Residues 97–120 form a helical membrane-spanning segment; that stretch reads YFINLAVADLILVADSLIEVFNLH. Topologically, residues 121-132 are extracellular; sequence ERYYDIAVLCTF. A disulfide bridge connects residues Cys-130 and Cys-207. A helical transmembrane segment spans residues 133–153; it reads MSLFLQVNMYSSVFFLTWMSF. Residues 154 to 175 are Cytoplasmic-facing; that stretch reads DRYIALARAMRCSLFRTKHHAR. The chain crosses the membrane as a helical span at residues 176–194; the sequence is LSCGLIWMASVSATLVPFT. The Extracellular segment spans residues 195–220; that stretch reads AVHLQHTDEACFCFADVREVQWLEVT. The helical transmembrane segment at 221–236 threads the bilayer; the sequence is LGFIVPFAIIGLCYSL. The Cytoplasmic portion of the chain corresponds to 237–259; it reads IVRVLVRAHRHRGLRPRRQKALR. Residues 260–280 form a helical membrane-spanning segment; the sequence is MILAVVLVFFVCWLPENVFIS. Over 281-306 the chain is Extracellular; that stretch reads VHLLQRTQPGAAPCKQSFRHAHPLTG. A helical membrane pass occupies residues 307-327; sequence HIVNLAAFSNSCLNPLIYSFL. The Cytoplasmic segment spans residues 328-375; the sequence is GETFRDKLRLYIEQKTNLPALNRFCHAALKAVIPDSTEQSDVRFSSAV.

It belongs to the G-protein coupled receptor 1 family. As to quaternary structure, homodimer. Heterodimer; heterodimerizes with other G-protein-coupled receptor (GPCRs) like CRHR1, HTR1A and PAQR8. Interacts (via C-terminus tail motif) with DLG4 (via N-terminus tandem pair of PDZ domains); the interaction is direct and induces the increase of GPER1 protein levels residing at the plasma membrane surface in a estradiol-independent manner. Interacts with RAMP3; the interaction confers proper subcellular localization and function in cardioprotection. Interacts with KRT7 and KRT8. Interacts with EGFR; the interaction increases after agonist-induced stimulation in cancer-associated fibroblasts (CAF). Interacts with EGFR and ESR1. Ubiquitinated; ubiquitination occurs at the plasma membrane and leads to proteasome-mediated degradation. Post-translationally, glycosylated. In terms of tissue distribution, expressed in placenta, endothelial and epithelial cells, non laboring and laboring term myometrium, fibroblasts and cancer-associated fibroblasts (CAF), prostate cancer cells and invasive adenocarcinoma (at protein level). Ubiquitously expressed, but is most abundant in placenta. In brain regions, expressed as a 2.8 kb transcript in basal forebrain, frontal cortex, thalamus, hippocampus, caudate and putamen.

It localises to the nucleus. The protein localises to the cytoplasm. The protein resides in the perinuclear region. Its subcellular location is the cytoskeleton. It is found in the cell membrane. It localises to the basolateral cell membrane. The protein localises to the cytoplasmic vesicle membrane. The protein resides in the early endosome. Its subcellular location is the recycling endosome. It is found in the golgi apparatus membrane. It localises to the golgi apparatus. The protein localises to the trans-Golgi network. The protein resides in the endoplasmic reticulum membrane. Its subcellular location is the cell projection. It is found in the dendrite. It localises to the dendritic spine membrane. The protein localises to the axon. The protein resides in the postsynaptic density. Its subcellular location is the mitochondrion membrane. Its function is as follows. G-protein coupled estrogen receptor that binds to 17-beta-estradiol (E2) with high affinity, leading to rapid and transient activation of numerous intracellular signaling pathways. Stimulates cAMP production, calcium mobilization and tyrosine kinase Src inducing the release of heparin-bound epidermal growth factor (HB-EGF) and subsequent transactivation of the epidermal growth factor receptor (EGFR), activating downstream signaling pathways such as PI3K/Akt and ERK/MAPK. Mediates pleiotropic functions among others in the cardiovascular, endocrine, reproductive, immune and central nervous systems. Has a role in cardioprotection by reducing cardiac hypertrophy and perivascular fibrosis in a RAMP3-dependent manner. Regulates arterial blood pressure by stimulating vasodilation and reducing vascular smooth muscle and microvascular endothelial cell proliferation. Plays a role in blood glucose homeostasis contributing to the insulin secretion response by pancreatic beta cells. Triggers mitochondrial apoptosis during pachytene spermatocyte differentiation. Stimulates uterine epithelial cell proliferation. Enhances uterine contractility in response to oxytocin. Contributes to thymic atrophy by inducing apoptosis. Attenuates TNF-mediated endothelial expression of leukocyte adhesion molecules. Promotes neuritogenesis in developing hippocampal neurons. Plays a role in acute neuroprotection against NMDA-induced excitotoxic neuronal death. Increases firing activity and intracellular calcium oscillations in luteinizing hormone-releasing hormone (LHRH) neurons. Inhibits early osteoblast proliferation at growth plate during skeletal development. Inhibits mature adipocyte differentiation and lipid accumulation. Involved in the recruitment of beta-arrestin 2 ARRB2 at the plasma membrane in epithelial cells. Also functions as a receptor for aldosterone mediating rapid regulation of vascular contractibility through the PI3K/ERK signaling pathway. Involved in cancer progression regulation. Stimulates cancer-associated fibroblast (CAF) proliferation by a rapid genomic response through the EGFR/ERK transduction pathway. Associated with EGFR, may act as a transcription factor activating growth regulatory genes (c-fos, cyclin D1). Promotes integrin alpha-5/beta-1 and fibronectin (FN) matrix assembly in breast cancer cells. The chain is G-protein coupled estrogen receptor 1 from Homo sapiens (Human).